The following is a 355-amino-acid chain: uncharacterized protein (355 aa).

This is an uncharacterized protein from Acanthamoeba polyphaga (Amoeba).